The sequence spans 295 residues: Glutamyl-Q tRNA(Asp) synthetase (295 aa).

Residues 5–9 and Glu-41 each bind L-glutamate; that span reads RFAPS. Positions 8–18 match the 'HIGH' region motif; the sequence is PSPTGLLHIGS. Zn(2+) is bound by residues Cys-97, Cys-99, Tyr-117, and Cys-121. Tyr-178 and Arg-196 together coordinate L-glutamate. The short motif at 234–238 is the 'KMSKS' region element; the sequence is KWSKQ. Lys-237 lines the ATP pocket.

This sequence belongs to the class-I aminoacyl-tRNA synthetase family. GluQ subfamily. Zn(2+) is required as a cofactor.

Its function is as follows. Catalyzes the tRNA-independent activation of glutamate in presence of ATP and the subsequent transfer of glutamate onto a tRNA(Asp). Glutamate is transferred on the 2-amino-5-(4,5-dihydroxy-2-cyclopenten-1-yl) moiety of the queuosine in the wobble position of the QUC anticodon. In Neisseria meningitidis serogroup C (strain 053442), this protein is Glutamyl-Q tRNA(Asp) synthetase.